The chain runs to 311 residues: tRNA dimethylallyltransferase (311 aa).

8–15 is a binding site for ATP; the sequence is GPTGVGKS. 10–15 is a binding site for substrate; the sequence is TGVGKS.

Belongs to the IPP transferase family. In terms of assembly, monomer. Requires Mg(2+) as cofactor.

The catalysed reaction is adenosine(37) in tRNA + dimethylallyl diphosphate = N(6)-dimethylallyladenosine(37) in tRNA + diphosphate. Its function is as follows. Catalyzes the transfer of a dimethylallyl group onto the adenine at position 37 in tRNAs that read codons beginning with uridine, leading to the formation of N6-(dimethylallyl)adenosine (i(6)A). The chain is tRNA dimethylallyltransferase from Mycobacterium leprae (strain Br4923).